Reading from the N-terminus, the 295-residue chain is MTLNNVTMRQGTVGMQPQQRWSIPADARHLMVQKDPHPCNLRNRHSTAPEEHCRRSWSSDSTDSVISSESGNTYYRVVLIGEQGVGKSTLANIFAGVHDSMDSDCEVLGEDTYERTLVVDGESATIILLDMWENKGENEWLHDHCMQVGDAYLIVYSITDRASFEKASELRIQLRRARQTEDIPIILVGNKSDLVRCREVSVSEGRACAVVFDCKFIETSAAVQHNVKELFEGIVRQVRLRRDSKEKNERRLAYQKRRESIPRKARRFWGKIVAKNNKNMAFKLKSKSCHDLSVL.

The disordered stretch occupies residues 39–64 (CNLRNRHSTAPEEHCRRSWSSDSTDS). GTP is bound by residues 81–88 (GEQGVGKS) and 190–193 (NKSD). The segment at 265-284 (ARRFWGKIVAKNNKNMAFKL) is calmodulin-binding.

This sequence belongs to the small GTPase superfamily. RGK family. Interacts with calmodulin in a Ca(2+)-dependent manner. Calmodulin binding significantly decreases GTP binding. Binds ROCK1. In terms of processing, phosphorylated on tyrosine residues.

The protein resides in the cell membrane. Functionally, could be a regulatory protein, possibly participating in receptor-mediated signal transduction at the plasma membrane. Has guanine nucleotide-binding activity but undetectable intrinsic GTPase activity. The sequence is that of GTP-binding protein GEM (Gem) from Mus musculus (Mouse).